The chain runs to 308 residues: D-alanine--D-alanine ligase B (308 aa).

In terms of domain architecture, ATP-grasp spans 102–302; the sequence is KKIVKTVGVP…FGELLSWMVE (201 aa). Residue 128-183 participates in ATP binding; that stretch reads PMKPPYVIKPVNEGSSFGVVIVSEGQSHPPQVVGSSEWKYGDTVMVERYIHGRELT. Residues Asp252, Glu269, and Asn271 each contribute to the Mg(2+) site.

It belongs to the D-alanine--D-alanine ligase family. It depends on Mg(2+) as a cofactor. Requires Mn(2+) as cofactor.

The protein localises to the cytoplasm. The enzyme catalyses 2 D-alanine + ATP = D-alanyl-D-alanine + ADP + phosphate + H(+). The protein operates within cell wall biogenesis; peptidoglycan biosynthesis. Cell wall formation. This Mesorhizobium japonicum (strain LMG 29417 / CECT 9101 / MAFF 303099) (Mesorhizobium loti (strain MAFF 303099)) protein is D-alanine--D-alanine ligase B.